The sequence spans 880 residues: Beta-glucosidase 2 (880 aa).

Positions 1–17 (MLLILELLVLIIGLGVA) are cleaved as a signal peptide. Asn-24, Asn-77, and Asn-271 each carry an N-linked (GlcNAc...) asparagine glycan. The active site involves Asp-299. N-linked (GlcNAc...) asparagine glycosylation is found at Asn-336, Asn-343, Asn-376, Asn-548, Asn-589, Asn-712, Asn-743, and Asn-794.

Belongs to the glycosyl hydrolase 3 family.

It carries out the reaction Hydrolysis of terminal, non-reducing beta-D-glucosyl residues with release of beta-D-glucose.. The protein operates within glycan metabolism; cellulose degradation. The polypeptide is Beta-glucosidase 2 (BGL2) (Saccharomycopsis fibuligera (Yeast)).